Reading from the N-terminus, the 1048-residue chain is B3 domain-containing protein Os02g0598200 (1048 aa).

Residues 1-345 (MDGAVRGQGC…QKERVASSDN (345 aa)) form a disordered region. The span at 16–25 (SFNKTKKKNR) shows a compositional bias: basic residues. Composition is skewed to basic and acidic residues over residues 26–134 (NCSD…SDDM), 151–162 (KKNSRNDADEEK), 169–214 (CSDD…GDKK), 243–253 (KNMKSDGDSYK), 281–295 (AKER…MEMK), and 332–345 (LKRE…SSDN). Positions 375-468 (AFAFFKFVRD…TFSVRVFGID (94 aa)) form a DNA-binding region, TF-B3 1. Residues 505–528 (QYQDSEDIHDGPNVSGESPRSKEP) form a disordered region. A DNA-binding region (TF-B3 2) is located at residues 953-1048 (LQFCIPSTIQ…LAFQVYITRK (96 aa)).

It is found in the nucleus. The polypeptide is B3 domain-containing protein Os02g0598200 (Oryza sativa subsp. japonica (Rice)).